A 364-amino-acid chain; its full sequence is Mannose-1-phosphate guanyltransferase (364 aa).

The protein belongs to the transferase hexapeptide repeat family.

It localises to the cytoplasm. The enzyme catalyses alpha-D-mannose 1-phosphate + GTP + H(+) = GDP-alpha-D-mannose + diphosphate. It participates in nucleotide-sugar biosynthesis; GDP-alpha-D-mannose biosynthesis; GDP-alpha-D-mannose from alpha-D-mannose 1-phosphate (GTP route): step 1/1. Functionally, involved in cell wall synthesis where it is required for glycosylation. Involved in cell cycle progression through cell-size checkpoint. The protein is Mannose-1-phosphate guanyltransferase (MPG1) of Gibberella zeae (strain ATCC MYA-4620 / CBS 123657 / FGSC 9075 / NRRL 31084 / PH-1) (Wheat head blight fungus).